Consider the following 388-residue polypeptide: Formate-dependent phosphoribosylglycinamide formyltransferase (388 aa).

N(1)-(5-phospho-beta-D-ribosyl)glycinamide-binding positions include 20–21 (EL) and E80. Residues R112, K153, 158–163 (SSGKGQ), 193–196 (EEFI), and E201 each bind ATP. One can recognise an ATP-grasp domain in the interval 117 to 306 (RLAFEKLGLR…EFEIHARAIL (190 aa)). Mg(2+) is bound by residues E265 and E277. N(1)-(5-phospho-beta-D-ribosyl)glycinamide is bound by residues D284, K352, and 359–360 (RR).

Belongs to the PurK/PurT family. As to quaternary structure, homodimer.

It carries out the reaction N(1)-(5-phospho-beta-D-ribosyl)glycinamide + formate + ATP = N(2)-formyl-N(1)-(5-phospho-beta-D-ribosyl)glycinamide + ADP + phosphate + H(+). Its pathway is purine metabolism; IMP biosynthesis via de novo pathway; N(2)-formyl-N(1)-(5-phospho-D-ribosyl)glycinamide from N(1)-(5-phospho-D-ribosyl)glycinamide (formate route): step 1/1. Functionally, involved in the de novo purine biosynthesis. Catalyzes the transfer of formate to 5-phospho-ribosyl-glycinamide (GAR), producing 5-phospho-ribosyl-N-formylglycinamide (FGAR). Formate is provided by PurU via hydrolysis of 10-formyl-tetrahydrofolate. This is Formate-dependent phosphoribosylglycinamide formyltransferase from Methanococcus maripaludis (strain DSM 14266 / JCM 13030 / NBRC 101832 / S2 / LL).